A 650-amino-acid polypeptide reads, in one-letter code: Epithelial sodium channel subunit beta (650 aa).

The Cytoplasmic portion of the chain corresponds to 1–95 (MLLHINPAYL…IICEGPKKKA (95 aa)). Residues 96 to 116 (MWFLLTLLFTALVCWQWGIFI) form a helical membrane-spanning segment. The Extracellular segment spans residues 117-542 (RTYLSWEVSV…GGQFGFWMGG (426 aa)). Disulfide bonds link Cys143-Cys317, Cys229-Cys234, Cys241-Cys248, Cys294-Cys301, and Cys406-Cys458. An N-linked (GlcNAc...) asparagine glycan is attached at Asn244. Asn305 is a glycosylation site (N-linked (GlcNAc...) asparagine). Residues 543 to 563 (SVLCLIEFGEIIIDFVWITII) form a helical membrane-spanning segment. Topologically, residues 564–650 (KLVALAKSLR…IESDSEGDAI (87 aa)) are cytoplasmic. The disordered stretch occupies residues 600–650 (FQPDTAPRSPNTGPYPNEQALPIPGTPPPNYDSLRLQPLDVIESDSEGDAI). Positions 626–630 (PPPNY) match the PY motif; recruits WW domain-containing proteins and is thereby required for ubiquitination and inhibition of the channel by NEDD4 and NEDD4L motif. Over residues 641–650 (IESDSEGDAI) the composition is skewed to acidic residues. Phosphoserine is present on residues Ser643 and Ser645.

Belongs to the amiloride-sensitive sodium channel (TC 1.A.6) family. SCNN1B subfamily. Component of the heterotrimeric epithelial sodium channel (ENaC) composed of an alpha/SCNN1A, a beta/SCNN1B and a gamma/SCNN1G subunit. An additional delta/SCNN1D subunit can replace the alpha/SCNN1A subunit to form an alternative channel with specific properties. Interacts with WWP1 (via WW domains). Interacts with WWP2 (via WW domains); inhibits the channel. Interacts with the full-length immature form of PCSK9 (pro-PCSK9). Interacts (N-glycosylated) with BPIFA1; the interaction is direct and inhibits the proteolytic processing of SCNN1A and SCNN1G and the activation of ENaC. Ubiquitinated. Can be ubiquitinated at multiple sites and undergo monoubiquitination and polyubiquitination. Ubiquitination by NEDD4 or NEDD4L inhibits the ENaC channel through endocytosis, intracellular retention and degradation of its individual subunits. However, some studies could not confirm the ubiquitination of this subunit of the ENaC. In terms of processing, phosphorylated on serine and threonine residues. Aldosterone and insulin increase the basal level of phosphorylation. Post-translationally, N-glycosylated. N-glycosylation is required for interaction with BPIFA1.

The protein localises to the apical cell membrane. Its subcellular location is the cytoplasmic vesicle membrane. It catalyses the reaction Na(+)(in) = Na(+)(out). Its activity is regulated as follows. Originally identified and characterized by its inhibition by the diuretic drug amiloride. Its function is as follows. This is one of the three pore-forming subunits of the heterotrimeric epithelial sodium channel (ENaC), a critical regulator of sodium balance and fluid homeostasis. ENaC operates in epithelial tissues, where it mediates the electrodiffusion of sodium ions from extracellular fluid through the apical membrane of cells, with water following osmotically. It plays a key role in maintaining sodium homeostasis through electrogenic sodium reabsorption in the kidneys. Additionally, ENaC is essential for airway surface liquid homeostasis, which is crucial for proper mucus clearance. This Pan troglodytes (Chimpanzee) protein is Epithelial sodium channel subunit beta.